The sequence spans 942 residues: Chitin synthase 2 (942 aa).

Positions 1-13 (MAYHYSHDSDRRQ) are enriched in basic and acidic residues. A disordered region spans residues 1 to 132 (MAYHYSHDSD…PSHTDYSDED (132 aa)). The segment covering 18–33 (YNYPSNYSNPSQYSIP) has biased composition (low complexity). N-linked (GlcNAc...) asparagine glycosylation is present at Asn23. Polar residues predominate over residues 71–80 (PQPTASSMTS). Asn587 carries N-linked (GlcNAc...) asparagine glycosylation. 4 helical membrane-spanning segments follow: residues 590–610 (IFAA…GHGI), 625–645 (FNLL…FFLI), 663–683 (IFQV…VCSL), and 696–716 (FCIF…GWTV). N-linked (GlcNAc...) asparagine glycosylation occurs at Asn736. Transmembrane regions (helical) follow at residues 739–759 (FVQL…SSLL) and 770–790 (FVQY…YAMC). Asn803 is a glycosylation site (N-linked (GlcNAc...) asparagine). Transmembrane regions (helical) follow at residues 873–893 (VVLL…SSTF) and 916–936 (IFYA…LYLI).

It belongs to the chitin synthase family. Class III subfamily.

It is found in the cell membrane. It catalyses the reaction [(1-&gt;4)-N-acetyl-beta-D-glucosaminyl](n) + UDP-N-acetyl-alpha-D-glucosamine = [(1-&gt;4)-N-acetyl-beta-D-glucosaminyl](n+1) + UDP + H(+). Its function is as follows. Polymerizes chitin, a structural polymer of the cell wall and septum, by transferring the sugar moiety of UDP-GlcNAc to the non-reducing end of the growing chitin polymer. This Cryptococcus neoformans var. grubii serotype A (strain H99 / ATCC 208821 / CBS 10515 / FGSC 9487) (Filobasidiella neoformans var. grubii) protein is Chitin synthase 2.